A 670-amino-acid chain; its full sequence is Outer dynein arm-docking complex subunit 1 (670 aa).

Coiled-coil stretches lie at residues 9–155 (SKEV…RYLN), 183–224 (AVRE…EQLH), and 302–381 (NFIN…IQLL). The tract at residues 454-473 (KMAPLQPPDTLEDPPGFEAS) is disordered. Residue Ser517 is modified to Phosphoserine. Disordered regions lie at residues 526 to 596 (AGSS…ASSG) and 616 to 670 (VGSS…DSRG). The segment covering 584–596 (GHVTFGSTSASSG) has biased composition (polar residues). The segment covering 650-670 (SSTGPASSTGPGSSTSKDSRG) has biased composition (low complexity).

Belongs to the ODA1/DCC2 family. As to quaternary structure, component of the outer dynein arm-docking complex along with ODAD2, ODAD3, ODAD4 and CLXN. Interacts with ODAD3. Interacts with ODAD4; this interaction may facilitate the recruitment and/or attachment of outer dynein arm docking complex proteins, including ODAD1, ODAD3, and ODAD4 to ciliary axonemes. Interacts with DNAH9. Interacts with MNS1. Interacts with PIERCE1 and PIERCE2; the interactions link the outer dynein arms docking complex (ODA-DC) to the internal microtubule inner proteins (MIP) in cilium axoneme. Expressed in nasal epithelial cells. Highly expressed in testis and also detected in lung, brain and kidney.

It is found in the cytoplasm. The protein localises to the cytoskeleton. The protein resides in the cilium axoneme. In terms of biological role, component of the outer dynein arm-docking complex (ODA-DC) that mediates outer dynein arms (ODA) binding onto the doublet microtubule. Involved in mediating assembly of both ODAs and their axonemal docking complex onto ciliary microtubules. The protein is Outer dynein arm-docking complex subunit 1 of Homo sapiens (Human).